The following is a 363-amino-acid chain: uncharacterized protein (363 aa).

Transmembrane regions (helical) follow at residues 20–40, 63–83, 101–121, 141–161, 186–206, 227–247, and 268–288; these read WFFT…NTNI, INFA…FLVM, FPLI…GVQS, SVWQ…FTAF, FSLL…IMLA, IFKY…CVVL, and FLIV…WYVL. The tract at residues 329–363 is disordered; the sequence is PRADLTPNDTLHMESKKKPLSQSPRVVIEEEDVAE.

It localises to the membrane. This is an uncharacterized protein from Caenorhabditis elegans.